A 445-amino-acid chain; its full sequence is UPF0210 protein SSU05_0296 (445 aa).

Belongs to the UPF0210 family. Homodimer.

This Streptococcus suis (strain 05ZYH33) protein is UPF0210 protein SSU05_0296.